A 246-amino-acid chain; its full sequence is Probable septum site-determining protein MinC (246 aa).

It belongs to the MinC family. In terms of assembly, interacts with MinD and FtsZ.

Cell division inhibitor that blocks the formation of polar Z ring septums. Rapidly oscillates between the poles of the cell to destabilize FtsZ filaments that have formed before they mature into polar Z rings. Prevents FtsZ polymerization. This chain is Probable septum site-determining protein MinC, found in Lachnospira eligens (strain ATCC 27750 / DSM 3376 / VPI C15-48 / C15-B4) (Eubacterium eligens).